A 476-amino-acid polypeptide reads, in one-letter code: Aspartyl/glutamyl-tRNA(Asn/Gln) amidotransferase subunit B (476 aa).

Belongs to the GatB/GatE family. GatB subfamily. In terms of assembly, heterotrimer of A, B and C subunits.

It carries out the reaction L-glutamyl-tRNA(Gln) + L-glutamine + ATP + H2O = L-glutaminyl-tRNA(Gln) + L-glutamate + ADP + phosphate + H(+). It catalyses the reaction L-aspartyl-tRNA(Asn) + L-glutamine + ATP + H2O = L-asparaginyl-tRNA(Asn) + L-glutamate + ADP + phosphate + 2 H(+). In terms of biological role, allows the formation of correctly charged Asn-tRNA(Asn) or Gln-tRNA(Gln) through the transamidation of misacylated Asp-tRNA(Asn) or Glu-tRNA(Gln) in organisms which lack either or both of asparaginyl-tRNA or glutaminyl-tRNA synthetases. The reaction takes place in the presence of glutamine and ATP through an activated phospho-Asp-tRNA(Asn) or phospho-Glu-tRNA(Gln). This chain is Aspartyl/glutamyl-tRNA(Asn/Gln) amidotransferase subunit B, found in Listeria monocytogenes serotype 4b (strain CLIP80459).